Here is a 1159-residue protein sequence, read N- to C-terminus: Phosphatidylinositol 3-kinase age-1 (1159 aa).

Positions 1 to 25 (MSMGRSSSTTFRNRTASHGSRSLGS) are enriched in polar residues. A disordered region spans residues 1–28 (MSMGRSSSTTFRNRTASHGSRSLGSAET). The PI3K-ABD domain maps to 79–179 (SEGVADMIVL…FPMLFLFEPD (101 aa)). Positions 272 to 363 (RKSEANEVWE…YRCPGFVVRR (92 aa)) constitute a PI3K-RBD domain. The C2 PI3K-type domain maps to 430-588 (LDSNLMIRPV…VKMPNEAQYK (159 aa)). Residues 607-793 (DYEACIGDPG…SLLMEAYLRG (187 aa)) form the PIK helical domain. The PI3K/PI4K catalytic domain maps to 858-1159 (VIEKAIVLGS…NWLFHAMKHY (302 aa)). The G-loop stretch occupies residues 864–870 (VLGSAKQ). The interval 1028–1036 (GIKDRHSDN) is catalytic loop. The activation loop stretch occupies residues 1047–1073 (HIDFGHILGHGKTKLGIQRDRQPFILT).

Belongs to the PI3/PI4-kinase family.

The enzyme catalyses a 1,2-diacyl-sn-glycero-3-phospho-(1D-myo-inositol) + ATP = a 1,2-diacyl-sn-glycero-3-phospho-(1D-myo-inositol-3-phosphate) + ADP + H(+). Phosphatidylinositol 3-kinase homolog that regulates longevity and diapause. Promotes cell survival during embryonic development by recruiting akt-1/2 to the plasma membrane through the production of PtdIns(3,4,5)P3. Could function in the development or neuroendocrine signaling of the dauer pathway. Mediates susceptibility to enteropathogenic E.coli infection. May negatively regulate AYI interneuron neurite outgrowth. Plays a role in aversive olfactory learning when an odor is associated with food deprivation. Regulates this process by promoting the nuclear relocalization of egl-4 in AWC olfactory neurons after odor conditioning. This chain is Phosphatidylinositol 3-kinase age-1 (age-1), found in Caenorhabditis briggsae.